The following is a 514-amino-acid chain: MTLLPGDNSDYDYSALSCASDTSFHPAFFPQRQAIKGVFYRRAQRLGPQDDLHQSISLGDRRRQIIINVGGIKYSLPWTTLDEFPLTRLGQLKACTNFDDILSVCDDYDVTCNEFFFDRNPGAFGTILTFLRAGKLRLLREMCALSFQEELLYWGIAEDHLDGCCKRRYLQKIEEFAEMMEREDEEEALDSEDQESEGPSTSEGRLSRCMRRLRDMVEKPHSGLPGKVFACLSVLFVTVTAVNLSVSTLPSLREEEEQGQCSQMCHNVFIVESVCVGWFSLEFLLRFIQAPSKFAFLRSPLTLIDLVAILPYYVTLLVDGAASSRRKPSTGNSYLDKVGLVLRVLRALRILYVMRLARHSLGLQTLGLTARRCTREFGLLLLFLCVAIALFAPLLYVIENEMADSPEFTSIPACYWWAVITMTTVGYGDMVPRSTPGQVVALSSILSGILLMAFPVTSIFHTFSRSYLELKQEQERVLIRRAQYLIKTKSQLSGMSQDSDILFGSASSDTRDNN.

Residues 1–224 (MTLLPGDNSD…DMVEKPHSGL (224 aa)) are Cytoplasmic-facing. Over residues 181-196 (EREDEEEALDSEDQES) the composition is skewed to acidic residues. The disordered stretch occupies residues 181–205 (EREDEEEALDSEDQESEGPSTSEGR). The helical transmembrane segment at 225–246 (PGKVFACLSVLFVTVTAVNLSV) threads the bilayer. Over 247–267 (STLPSLREEEEQGQCSQMCHN) the chain is Extracellular. Residues 268–289 (VFIVESVCVGWFSLEFLLRFIQ) traverse the membrane as a helical segment. Residues 290–300 (APSKFAFLRSP) are Cytoplasmic-facing. The helical transmembrane segment at 301 to 321 (LTLIDLVAILPYYVTLLVDGA) threads the bilayer. The Extracellular segment spans residues 322 to 338 (ASSRRKPSTGNSYLDKV). The helical; Voltage-sensor transmembrane segment at 339–359 (GLVLRVLRALRILYVMRLARH) threads the bilayer. Over 360-374 (SLGLQTLGLTARRCT) the chain is Cytoplasmic. Residues 375 to 396 (REFGLLLLFLCVAIALFAPLLY) form a helical membrane-spanning segment. At 397-411 (VIENEMADSPEFTSI) the chain is on the extracellular side. The helical intramembrane region spans 412 to 423 (PACYWWAVITMT). A Selectivity filter motif is present at residues 424–429 (TVGYGD). Residues 424–431 (TVGYGDMV) lie within the membrane without spanning it. At 432 to 438 (PRSTPGQ) the chain is on the extracellular side. The chain crosses the membrane as a helical span at residues 439 to 467 (VVALSSILSGILLMAFPVTSIFHTFSRSY). The Cytoplasmic segment spans residues 468-514 (LELKQEQERVLIRRAQYLIKTKSQLSGMSQDSDILFGSASSDTRDNN).

The protein belongs to the potassium channel family. G (TC 1.A.1.2) subfamily. Kv6.1/KCNG1 sub-subfamily. In terms of assembly, heterotetramer with KCNB1 or KCNB2.

It is found in the cell membrane. Regulatory alpha-subunit of the voltage-gated potassium (Kv) channel which, when coassembled with KCNB1 or KCNB2, can modulate their expression and their gating kinetics by acting on deactivation upon repolarization and inactivation during maintained depolarization. Potassium channel subunit that does not form functional channels by itself. This is Voltage-gated potassium channel regulatory subunit KCNG1 from Rattus norvegicus (Rat).